The following is a 684-amino-acid chain: Homoaconitase, mitochondrial (684 aa).

Residues cysteine 337, cysteine 397, and cysteine 400 each coordinate [4Fe-4S] cluster.

Belongs to the aconitase/IPM isomerase family. [4Fe-4S] cluster is required as a cofactor.

The protein resides in the mitochondrion. The enzyme catalyses (2R,3S)-homoisocitrate = cis-homoaconitate + H2O. Its pathway is amino-acid biosynthesis; L-lysine biosynthesis via AAA pathway; L-alpha-aminoadipate from 2-oxoglutarate: step 3/5. Catalyzes the reversible hydration of cis-homoaconitate to (2R,3S)-homoisocitrate, a step in the alpha-aminoadipate pathway for lysine biosynthesis. The sequence is that of Homoaconitase, mitochondrial (LYS4) from Candida albicans (strain SC5314 / ATCC MYA-2876) (Yeast).